We begin with the raw amino-acid sequence, 486 residues long: Maintenance of mitochondrial morphology protein 1 (486 aa).

Over 1-23 (MSQHSQYDAPGVPVQPSLSFTQG) the chain is Lumenal. The helical transmembrane segment at 24–44 (FLLGQLSVVLLIGAFIKFFIF) threads the bilayer. The Cytoplasmic segment spans residues 45 to 486 (GEAPAPPSRG…PGSMPGGRAQ (442 aa)). The interval 52 to 103 (SRGLASRTASHHRSYSINQGDNNVSNNNTSGGSPRTLCEKPSTSNVLRPVPS) is disordered. The span at 67–84 (SINQGDNNVSNNNTSGGS) shows a compositional bias: low complexity. Polar residues predominate over residues 92–103 (PSTSNVLRPVPS). Positions 140 to 389 (QPESLDWFNV…EPRVQVVGLP (250 aa)) constitute an SMP-LTD domain. The span at 413–426 (AAASASSRGGAPEA) shows a compositional bias: low complexity. Positions 413-486 (AAASASSRGG…PGSMPGGRAQ (74 aa)) are disordered.

This sequence belongs to the MMM1 family. As to quaternary structure, homodimer. Component of the ER-mitochondria encounter structure (ERMES) or MDM complex, composed of mmm1, mdm10, mdm12 and mdm34. A mmm1 homodimer associates with one molecule of mdm12 on each side in a pairwise head-to-tail manner, and the SMP-LTD domains of mmm1 and mdm12 generate a continuous hydrophobic tunnel for phospholipid trafficking.

Its subcellular location is the endoplasmic reticulum membrane. Component of the ERMES/MDM complex, which serves as a molecular tether to connect the endoplasmic reticulum (ER) and mitochondria. Components of this complex are involved in the control of mitochondrial shape and protein biogenesis, and function in nonvesicular lipid trafficking between the ER and mitochondria. The mdm12-mmm1 subcomplex functions in the major beta-barrel assembly pathway that is responsible for biogenesis of all outer membrane beta-barrel proteins, and acts in a late step after the SAM complex. The mdm10-mdm12-mmm1 subcomplex further acts in the TOM40-specific pathway after the action of the mdm12-mmm1 complex. Essential for establishing and maintaining the structure of mitochondria and maintenance of mtDNA nucleoids. The chain is Maintenance of mitochondrial morphology protein 1 from Talaromyces marneffei (strain ATCC 18224 / CBS 334.59 / QM 7333) (Penicillium marneffei).